We begin with the raw amino-acid sequence, 370 residues long: 3-isopropylmalate dehydrogenase (370 aa).

Residues Arg99, Arg109, Arg137, and Asp227 each coordinate substrate. Positions 227, 251, and 255 each coordinate Mg(2+). Position 290–302 (290–302 (GSAPDIAGQDKAN)) interacts with NAD(+).

The protein belongs to the isocitrate and isopropylmalate dehydrogenases family. LeuB type 1 subfamily. In terms of assembly, homodimer. It depends on Mg(2+) as a cofactor. Requires Mn(2+) as cofactor.

Its subcellular location is the cytoplasm. It carries out the reaction (2R,3S)-3-isopropylmalate + NAD(+) = 4-methyl-2-oxopentanoate + CO2 + NADH. Its pathway is amino-acid biosynthesis; L-leucine biosynthesis; L-leucine from 3-methyl-2-oxobutanoate: step 3/4. Functionally, catalyzes the oxidation of 3-carboxy-2-hydroxy-4-methylpentanoate (3-isopropylmalate) to 3-carboxy-4-methyl-2-oxopentanoate. The product decarboxylates to 4-methyl-2 oxopentanoate. The protein is 3-isopropylmalate dehydrogenase of Rhodospirillum rubrum (strain ATCC 11170 / ATH 1.1.1 / DSM 467 / LMG 4362 / NCIMB 8255 / S1).